The primary structure comprises 504 residues: AMP phosphorylase 1 (504 aa).

Residues G169, 195–200, and T204 contribute to the AMP site; that span reads SRAITS. D257 (proton donor) is an active-site residue. The AMP site is built by S265 and K289.

Belongs to the thymidine/pyrimidine-nucleoside phosphorylase family. Type 2 subfamily.

The enzyme catalyses AMP + phosphate = alpha-D-ribose 1,5-bisphosphate + adenine. It catalyses the reaction CMP + phosphate = cytosine + alpha-D-ribose 1,5-bisphosphate. It carries out the reaction UMP + phosphate = alpha-D-ribose 1,5-bisphosphate + uracil. In terms of biological role, catalyzes the conversion of AMP and phosphate to adenine and ribose 1,5-bisphosphate (R15P). Exhibits phosphorylase activity toward CMP and UMP in addition to AMP. Functions in an archaeal AMP degradation pathway, together with R15P isomerase and RubisCO. The chain is AMP phosphorylase 1 from Archaeoglobus fulgidus (strain ATCC 49558 / DSM 4304 / JCM 9628 / NBRC 100126 / VC-16).